The following is a 448-amino-acid chain: 3-phosphoshikimate 1-carboxyvinyltransferase (448 aa).

Residues Lys-28, Ser-29, and Arg-33 each contribute to the 3-phosphoshikimate site. Lys-28 lines the phosphoenolpyruvate pocket. Phosphoenolpyruvate is bound by residues Gly-100 and Arg-128. Positions 173, 175, 326, and 353 each coordinate 3-phosphoshikimate. Phosphoenolpyruvate is bound at residue Gln-175. Asp-326 serves as the catalytic Proton acceptor. Positions 357 and 405 each coordinate phosphoenolpyruvate.

The protein belongs to the EPSP synthase family. As to quaternary structure, monomer.

The protein resides in the cytoplasm. It catalyses the reaction 3-phosphoshikimate + phosphoenolpyruvate = 5-O-(1-carboxyvinyl)-3-phosphoshikimate + phosphate. It participates in metabolic intermediate biosynthesis; chorismate biosynthesis; chorismate from D-erythrose 4-phosphate and phosphoenolpyruvate: step 6/7. Functionally, catalyzes the transfer of the enolpyruvyl moiety of phosphoenolpyruvate (PEP) to the 5-hydroxyl of shikimate-3-phosphate (S3P) to produce enolpyruvyl shikimate-3-phosphate and inorganic phosphate. In Sinorhizobium fredii (strain NBRC 101917 / NGR234), this protein is 3-phosphoshikimate 1-carboxyvinyltransferase.